A 214-amino-acid chain; its full sequence is tRNA (guanine-N(7)-)-methyltransferase (214 aa).

4 residues coordinate S-adenosyl-L-methionine: E43, E68, D95, and D117. D117 is a catalytic residue. Residues K121, D153, and 191 to 194 each bind substrate; that span reads TEYE.

It belongs to the class I-like SAM-binding methyltransferase superfamily. TrmB family.

The enzyme catalyses guanosine(46) in tRNA + S-adenosyl-L-methionine = N(7)-methylguanosine(46) in tRNA + S-adenosyl-L-homocysteine. It functions in the pathway tRNA modification; N(7)-methylguanine-tRNA biosynthesis. Functionally, catalyzes the formation of N(7)-methylguanine at position 46 (m7G46) in tRNA. The protein is tRNA (guanine-N(7)-)-methyltransferase of Brevibacillus brevis (strain 47 / JCM 6285 / NBRC 100599).